A 124-amino-acid chain; its full sequence is Small ribosomal subunit protein uS12cy (124 aa).

This sequence belongs to the universal ribosomal protein uS12 family. In terms of assembly, part of the 30S ribosomal subunit.

The protein resides in the plastid. It localises to the chloroplast. In terms of biological role, with S4 and S5 plays an important role in translational accuracy. Located at the interface of the 30S and 50S subunits. The protein is Small ribosomal subunit protein uS12cy (rps12-B) of Olimarabidopsis pumila (Dwarf rocket).